The chain runs to 278 residues: Fe(II)/2-oxoglutarate-dependent dioxygenase nvfI (278 aa).

It belongs to the asaB hydroxylase/desaturase family.

It carries out the reaction asnovolin A + 2-oxoglutarate + 2 O2 = fumigatonoid A + succinate + CO2. It participates in secondary metabolite biosynthesis; terpenoid biosynthesis. Functionally, fe(II)/2-oxoglutarate-dependent dioxygenase; part of the gene cluster that mediates the biosynthesis of novofumigatonin, a heavily oxygenated meroterpenoid containing a unique orthoester moiety. The first step of the pathway is the synthesis of 3,5-dimethylorsellinic acid (DMOA) by the polyketide synthase nvfA via condensation of one acetyl-CoA starter unit with 3 malonyl-CoA units and 2 methylations. DMOA is then converted to farnesyl-DMOA by the farnesyltransferase nvfB. Epoxydation by FAD-dependent monooxygenase nvfK, followed by a protonation-initiated cyclization catalyzed by the terpene cyclase nvfL leads to the production of asnavolin H. The short chain dehydrogenase nvfC then as a 3-OH dehydrogenase of asnovolin H to yield chemesin D. There are two branches to synthesize asnovolin A from chemesin D. In one branch, chemesin D undergoes Baeyer-Villiger oxidation by nvfH, methylation by nvfJ, and enoyl reduction by the nvfM D enoylreductase that reduces the double bond between C-5'and C-6', to form respectively asnovolin I, asnovolin K, and asnovolin A. In the other branch, the methylation precedes the Baeyer-Villiger oxidation and the enoyl reduction to yield asnovolin A via the asnovolin J intermediate. Asnovolin A is further converted to fumigatonoid A by the Fe(II)/2-oxoglutarate-dependent dioxygenase nvfI that catalyzes an endoperoxidation reaction. The alpha/beta hydrolase nvfD then acts as an epimerase that converts fumigatonoid A to its C-5' epimer, which then undergoes spontaneous or nvfD-catalyzed lactonization. The following step utilizes the ketoreductase nvfG to produce fumigatonoid B. The dioxygenase nvfE further converts fumigatonoid B into fumigatonoid C. Finally the Fe(II)/2-oxoglutarate-dependent dioxygenase nvfF catalyzes two rounds of oxidation to transform fumigatonoid C into the end product, novofumigatonin A. This Aspergillus novofumigatus (strain IBT 16806) protein is Fe(II)/2-oxoglutarate-dependent dioxygenase nvfI.